A 263-amino-acid polypeptide reads, in one-letter code: Troponin T, fast skeletal muscle isoforms (263 aa).

Positions methionine 1 to glutamate 26 are enriched in acidic residues. 3 disordered regions span residues methionine 1–isoleucine 66, arginine 107–glutamate 188, and aspartate 243–lysine 263. Residue serine 2 is modified to N-acetylserine. 3 stretches are compositionally biased toward basic and acidic residues: residues proline 56–isoleucine 66, arginine 107–lysine 149, and threonine 177–glutamate 188. The span at lysine 247–lysine 263 shows a compositional bias: basic residues.

It belongs to the troponin T family.

Its function is as follows. Troponin T is the tropomyosin-binding subunit of troponin, the thin filament regulatory complex which confers calcium-sensitivity to striated muscle actomyosin ATPase activity. The protein is Troponin T, fast skeletal muscle isoforms (TNNT3) of Gallus gallus (Chicken).